Reading from the N-terminus, the 442-residue chain is Ribosomal protein uS12 methylthiotransferase RimO (442 aa).

The region spanning Pro9 to Pro119 is the MTTase N-terminal domain. 6 residues coordinate [4Fe-4S] cluster: Cys18, Cys54, Cys83, Cys151, Cys155, and Cys158. The region spanning Leu137–Arg375 is the Radical SAM core domain. The 66-residue stretch at Gln377–Val442 folds into the TRAM domain.

This sequence belongs to the methylthiotransferase family. RimO subfamily. Requires [4Fe-4S] cluster as cofactor.

It localises to the cytoplasm. The enzyme catalyses L-aspartate(89)-[ribosomal protein uS12]-hydrogen + (sulfur carrier)-SH + AH2 + 2 S-adenosyl-L-methionine = 3-methylsulfanyl-L-aspartate(89)-[ribosomal protein uS12]-hydrogen + (sulfur carrier)-H + 5'-deoxyadenosine + L-methionine + A + S-adenosyl-L-homocysteine + 2 H(+). In terms of biological role, catalyzes the methylthiolation of an aspartic acid residue of ribosomal protein uS12. The chain is Ribosomal protein uS12 methylthiotransferase RimO from Pectobacterium atrosepticum (strain SCRI 1043 / ATCC BAA-672) (Erwinia carotovora subsp. atroseptica).